Consider the following 293-residue polypeptide: ATP synthase gamma chain (293 aa).

The protein belongs to the ATPase gamma chain family. As to quaternary structure, F-type ATPases have 2 components, CF(1) - the catalytic core - and CF(0) - the membrane proton channel. CF(1) has five subunits: alpha(3), beta(3), gamma(1), delta(1), epsilon(1). CF(0) has three main subunits: a, b and c.

Its subcellular location is the cell membrane. Produces ATP from ADP in the presence of a proton gradient across the membrane. The gamma chain is believed to be important in regulating ATPase activity and the flow of protons through the CF(0) complex. The protein is ATP synthase gamma chain of Streptococcus gordonii (strain Challis / ATCC 35105 / BCRC 15272 / CH1 / DL1 / V288).